Reading from the N-terminus, the 618-residue chain is Grainyhead-like protein 1 homolog (618 aa).

Residues 1-91 (MTQEYDNKRP…EVEHPEPDHS (91 aa)) form a transcription activation region. Positions 74 to 92 (RRSSTAKPEVEHPEPDHSK) are enriched in basic and acidic residues. The disordered stretch occupies residues 74–94 (RRSSTAKPEVEHPEPDHSKRN). Residue threonine 208 is modified to Phosphothreonine. The Grh/CP2 DB domain occupies 248–474 (SGNNFEYTLE…DLDTQPVLFI (227 aa)). Interaction with DNA regions lie at residues 380-389 (TDFSSQKGVK) and 427-430 (RKIR).

Belongs to the grh/CP2 family. Grainyhead subfamily. In terms of assembly, binds DNA as homodimer. Homodimer, also forms heterodimers with GRHL2 or GRHL3. Post-translationally, methylation at Arg-9 and Lys-116 may be involved in regulating transcriptional activation. As to expression, isoform 1 is highly expressed in brain, pancreas, tonsil, placenta and kidney. Isoform 2 is highly expressed in brain and liver. Expressed at very low levels in non-steroidogenic cells.

Its subcellular location is the nucleus. In terms of biological role, transcription factor involved in epithelial development. Binds directly to the consensus DNA sequence 5'-AACCGGTT-3'. Important regulator of DSG1 in the context of hair anchorage and epidermal differentiation, participates in the maintenance of the skin barrier. There is no genetic interaction with GRHL3, nor functional cooperativity due to diverse target gene selectivity during epithelia development. May play a role in regulating glucose homeostasis and insulin signaling. Functions as a transcription activator. Its function is as follows. May function as a repressor in tissues where both isoform 1 and isoform 2 are expressed. The polypeptide is Grainyhead-like protein 1 homolog (Homo sapiens (Human)).